Here is a 158-residue protein sequence, read N- to C-terminus: MRSIAGLHKLKMEIFNVEELINMKPFKNMNKITINQKDNCILAYRCFVKIDTPRYIPSTSISSSNIIRIRNHDFTLSELLYSPFHFQQPQFQYLLPGFVLTCIDKVSKQQKECKYCISNRGDDDSLSINLFIPTINKSIYIIIGLRMKNFWKPKFEIE.

It belongs to the orthopoxvirus OPG058 family.

The polypeptide is Protein OPG060 (OPG060) (Homo sapiens (Human)).